Consider the following 212-residue polypeptide: Penicillin-binding protein activator LpoB (212 aa).

The first 19 residues, 1-19 (MTKMHRYAAIAALAIFLSG), serve as a signal peptide directing secretion. C20 carries N-palmitoyl cysteine lipidation. C20 is lipidated: S-diacylglycerol cysteine. The segment at 28–73 (PVEEVKPAPEQPAQPPQPPVVPSVPTIPQQPGPIEHEDQTGQPAPK) is disordered. The span at 36–49 (PEQPAQPPQPPVVP) shows a compositional bias: pro residues.

The protein belongs to the LpoB family. Interacts with PBP1b.

Its subcellular location is the cell outer membrane. Functionally, regulator of peptidoglycan synthesis that is essential for the function of penicillin-binding protein 1B (PBP1b). In Salmonella typhimurium (strain LT2 / SGSC1412 / ATCC 700720), this protein is Penicillin-binding protein activator LpoB.